A 325-amino-acid polypeptide reads, in one-letter code: tRNA N6-adenosine threonylcarbamoyltransferase (325 aa).

Fe cation-binding residues include H107 and H111. Residues 129–133, D162, G175, and N265 contribute to the substrate site; that span reads LVSGG. D293 contacts Fe cation.

Belongs to the KAE1 / TsaD family. Fe(2+) serves as cofactor.

The protein resides in the cytoplasm. The catalysed reaction is L-threonylcarbamoyladenylate + adenosine(37) in tRNA = N(6)-L-threonylcarbamoyladenosine(37) in tRNA + AMP + H(+). Required for the formation of a threonylcarbamoyl group on adenosine at position 37 (t(6)A37) in tRNAs that read codons beginning with adenine. Is involved in the transfer of the threonylcarbamoyl moiety of threonylcarbamoyl-AMP (TC-AMP) to the N6 group of A37, together with TsaE and TsaB. TsaD likely plays a direct catalytic role in this reaction. This chain is tRNA N6-adenosine threonylcarbamoyltransferase, found in Sulfurimonas denitrificans (strain ATCC 33889 / DSM 1251) (Thiomicrospira denitrificans (strain ATCC 33889 / DSM 1251)).